Consider the following 240-residue polypeptide: Dephospho-CoA kinase domain-containing protein (240 aa).

Positions 3 to 207 (LVGLTGGIAS…RSMEYLPLRL (205 aa)) constitute a DPCK domain. 8 to 15 (GGIASGKS) is a binding site for ATP.

This sequence belongs to the CoaE family.

This Rattus norvegicus (Rat) protein is Dephospho-CoA kinase domain-containing protein (Dcakd).